A 95-amino-acid chain; its full sequence is Glutamine synthetase and cystathionine beta-lyase binding protein (95 aa).

In terms of assembly, interacts with glutamine synthetase (TTHA1329) and cystathionine beta-lyase (TTHA1620), but proteins do not form a ternary complex.

Its function is as follows. Binds to glutamine synthetase and cystathionine beta-lyase. May be utilized for the efficient use of nitrogen in the global nitrogen regulation of T.thermophilus. This Thermus thermophilus (strain ATCC 27634 / DSM 579 / HB8) protein is Glutamine synthetase and cystathionine beta-lyase binding protein.